The chain runs to 153 residues: Histone H2B.6 (153 aa).

Composition is skewed to basic and acidic residues over residues 1-28 and 36-53; these read MAPK…EKAP and EKRL…EGKK. The interval 1–60 is disordered; the sequence is MAPKAEKKPAAKKPAEEEPAAEKAEKAPAGKKPKAEKRLPAGKGEKGSGEGKKAGRKKGK. Residues Lys-7 and Lys-37 each carry the N6-acetyllysine modification. Lys-149 participates in a covalent cross-link: Glycyl lysine isopeptide (Lys-Gly) (interchain with G-Cter in ubiquitin).

This sequence belongs to the histone H2B family. As to quaternary structure, the nucleosome is a histone octamer containing two molecules each of H2A, H2B, H3 and H4 assembled in one H3-H4 heterotetramer and two H2A-H2B heterodimers. The octamer wraps approximately 147 bp of DNA. In terms of processing, can be acetylated to form H2BK6ac and H2BK33ac. Post-translationally, monoubiquitinated by BRE1 to form H2BK143ub1 and deubiquitinated by UBP26. Required for heterochromatic histone H3 di- and trimethylation at H3K4me. May give a specific tag for epigenetic transcriptional activation.

The protein resides in the nucleus. It localises to the chromosome. Core component of nucleosome. Nucleosomes wrap and compact DNA into chromatin, limiting DNA accessibility to the cellular machineries which require DNA as a template. Histones thereby play a central role in transcription regulation, DNA repair, DNA replication and chromosomal stability. DNA accessibility is regulated via a complex set of post-translational modifications of histones, also called histone code, and nucleosome remodeling. The protein is Histone H2B.6 (H2B.6) of Oryza sativa subsp. japonica (Rice).